The sequence spans 70 residues: Guanine nucleotide-binding protein G(I)/G(S)/G(O) subunit gamma-8 (70 aa).

The residue at position 67 (Cys67) is a Cysteine methyl ester. Cys67 is lipidated: S-geranylgeranyl cysteine. Positions Val68 to Leu70 are cleaved as a propeptide — removed in mature form.

The protein belongs to the G protein gamma family. G proteins are composed of 3 units, alpha, beta and gamma.

It is found in the cell membrane. Its function is as follows. Guanine nucleotide-binding proteins (G proteins) are involved as a modulator or transducer in various transmembrane signaling systems. The beta and gamma chains are required for the GTPase activity, for replacement of GDP by GTP, and for G protein-effector interaction. In Homo sapiens (Human), this protein is Guanine nucleotide-binding protein G(I)/G(S)/G(O) subunit gamma-8 (GNG8).